A 645-amino-acid chain; its full sequence is DNA ligase (645 aa).

Residues 30–34 (DIEYD), 79–80 (SM), and glutamate 106 each bind NAD(+). The N6-AMP-lysine intermediate role is filled by lysine 108. 3 residues coordinate NAD(+): arginine 129, glutamate 163, and lysine 302. Zn(2+) is bound by residues cysteine 396, cysteine 399, cysteine 412, and cysteine 417. Positions 570–645 (ISQNVFTKKT…ISEDEFKEML (76 aa)) constitute a BRCT domain.

It belongs to the NAD-dependent DNA ligase family. LigA subfamily. Mg(2+) serves as cofactor. The cofactor is Mn(2+).

It catalyses the reaction NAD(+) + (deoxyribonucleotide)n-3'-hydroxyl + 5'-phospho-(deoxyribonucleotide)m = (deoxyribonucleotide)n+m + AMP + beta-nicotinamide D-nucleotide.. In terms of biological role, DNA ligase that catalyzes the formation of phosphodiester linkages between 5'-phosphoryl and 3'-hydroxyl groups in double-stranded DNA using NAD as a coenzyme and as the energy source for the reaction. It is essential for DNA replication and repair of damaged DNA. The chain is DNA ligase from Campylobacter hominis (strain ATCC BAA-381 / DSM 21671 / CCUG 45161 / LMG 19568 / NCTC 13146 / CH001A).